The chain runs to 327 residues: GTPase Obg (327 aa).

An Obg domain is found at 3–160 (NKFTDFIKIY…FIFVLELKIL (158 aa)). In terms of domain architecture, OBG-type G spans 161–327 (ADVGLIGLPN…LIYYICNILS (167 aa)). GTP-binding positions include 167–174 (GLPNSGKS), 192–196 (FTTLN), 214–217 (DIPG), 281–284 (SKSD), and 308–310 (SSF). The Mg(2+) site is built by Ser174 and Thr194.

Belongs to the TRAFAC class OBG-HflX-like GTPase superfamily. OBG GTPase family. As to quaternary structure, monomer. Mg(2+) is required as a cofactor.

It is found in the cytoplasm. Functionally, an essential GTPase which binds GTP, GDP and possibly (p)ppGpp with moderate affinity, with high nucleotide exchange rates and a fairly low GTP hydrolysis rate. Plays a role in control of the cell cycle, stress response, ribosome biogenesis and in those bacteria that undergo differentiation, in morphogenesis control. The sequence is that of GTPase Obg from Karelsulcia muelleri (strain GWSS) (Sulcia muelleri).